The chain runs to 333 residues: GTP 3',8-cyclase (333 aa).

Residues 7 to 221 form the Radical SAM core domain; that stretch reads KFGRVHDYIR…FEACNEAGYE (215 aa). R16 is a binding site for GTP. 2 residues coordinate [4Fe-4S] cluster: C23 and C27. Position 29 (Y29) interacts with S-adenosyl-L-methionine. C30 contacts [4Fe-4S] cluster. R66 is a binding site for GTP. S-adenosyl-L-methionine is bound at residue G70. GTP is bound at residue T97. S121 serves as a coordination point for S-adenosyl-L-methionine. K158 is a GTP binding site. M192 serves as a coordination point for S-adenosyl-L-methionine. The [4Fe-4S] cluster site is built by C257 and C260. A GTP-binding site is contributed by 262 to 264; the sequence is RLR. C274 serves as a coordination point for [4Fe-4S] cluster.

The protein belongs to the radical SAM superfamily. MoaA family. In terms of assembly, monomer and homodimer. Requires [4Fe-4S] cluster as cofactor.

It catalyses the reaction GTP + AH2 + S-adenosyl-L-methionine = (8S)-3',8-cyclo-7,8-dihydroguanosine 5'-triphosphate + 5'-deoxyadenosine + L-methionine + A + H(+). It participates in cofactor biosynthesis; molybdopterin biosynthesis. In terms of biological role, catalyzes the cyclization of GTP to (8S)-3',8-cyclo-7,8-dihydroguanosine 5'-triphosphate. The sequence is that of GTP 3',8-cyclase from Listeria monocytogenes serotype 4b (strain CLIP80459).